The following is a 2276-amino-acid chain: Protein Ycf2 (2276 aa).

1621–1628 contributes to the ATP binding site; that stretch reads GSIGTGRS.

The protein belongs to the Ycf2 family.

The protein localises to the plastid. It is found in the chloroplast stroma. Its function is as follows. Probable ATPase of unknown function. Its presence in a non-photosynthetic plant (Epifagus virginiana) and experiments in tobacco indicate that it has an essential function which is probably not related to photosynthesis. The chain is Protein Ycf2 from Guizotia abyssinica (Niger).